We begin with the raw amino-acid sequence, 436 residues long: 3-ketoacyl-CoA thiolase (436 aa).

Cys-99 (acyl-thioester intermediate) is an active-site residue. Residues His-392 and Cys-422 each act as proton acceptor in the active site.

Belongs to the thiolase-like superfamily. Thiolase family. As to quaternary structure, heterotetramer of two alpha chains (FadJ) and two beta chains (FadI).

It localises to the cytoplasm. The catalysed reaction is an acyl-CoA + acetyl-CoA = a 3-oxoacyl-CoA + CoA. Its pathway is lipid metabolism; fatty acid beta-oxidation. Catalyzes the final step of fatty acid oxidation in which acetyl-CoA is released and the CoA ester of a fatty acid two carbons shorter is formed. This Salmonella schwarzengrund (strain CVM19633) protein is 3-ketoacyl-CoA thiolase.